We begin with the raw amino-acid sequence, 230 residues long: Aspartate and serine-rich protein (230 aa).

N-linked (GlcNAc...) asparagine glycans are attached at residues asparagine 17, asparagine 132, and asparagine 139. The tract at residues 112-230 (LNGGATAGGV…DSDSNDTDSD (119 aa)) is disordered. Residues 126–140 (DTDESSNDTDEDSND) are compositionally biased toward acidic residues. Residues 141-161 (SDSKDTDSDSKDTDSDSKDSD) show a composition bias toward basic and acidic residues. Residues asparagine 163 and asparagine 170 are each glycosylated (N-linked (GlcNAc...) asparagine). Over residues 173 to 223 (DSKDTDSDSKDSDSKDTDSDSKDTDSDSKDSDSKDTDSDSKDTDSDSKDSD) the composition is skewed to basic and acidic residues. A glycan (N-linked (GlcNAc...) asparagine) is linked at asparagine 225.

As to expression, component of the acid-insoluble organic matrix of calcified layers of the shell (at protein level).

It is found in the secreted. The polypeptide is Aspartate and serine-rich protein (Lottia gigantea (Giant owl limpet)).